The sequence spans 203 residues: MYRLLCLLALLTAAGLMGCASQRGLTPPPDLQAHQQQLQAVASWQIDGKLGIRSPQESGSATLKWQQQPDNYQIYLSGPLGQKRLQIIGAPAAVTLLQSGQPPMHAQSAESLIKKAAGWTLPVSQLSYWVRGLPAPKTPITGLQLSPQGLISELQQANWTIHYSNYRDYYHGETRLALPGKIQAEYRDLRLTLVIRDWQLGIH.

Positions Met1–Gly18 are cleaved as a signal peptide. Residue Cys19 is the site of N-palmitoyl cysteine attachment. The S-diacylglycerol cysteine moiety is linked to residue Cys19.

Belongs to the LolB family. In terms of assembly, monomer.

It is found in the cell outer membrane. Its function is as follows. Plays a critical role in the incorporation of lipoproteins in the outer membrane after they are released by the LolA protein. In Cellvibrio japonicus (strain Ueda107) (Pseudomonas fluorescens subsp. cellulosa), this protein is Outer-membrane lipoprotein LolB.